Consider the following 683-residue polypeptide: DNA ligase (683 aa).

NAD(+)-binding positions include 35-39 (DADYD), 84-85 (SL), and Glu-115. Catalysis depends on Lys-117, which acts as the N6-AMP-lysine intermediate. The NAD(+) site is built by Arg-138, Glu-175, Lys-293, and Lys-317. The Zn(2+) site is built by Cys-411, Cys-414, Cys-429, and Cys-435. The BRCT domain occupies 598-683 (QTNSAVSGKT…LQNISTGAQQ (86 aa)).

This sequence belongs to the NAD-dependent DNA ligase family. LigA subfamily. The cofactor is Mg(2+). It depends on Mn(2+) as a cofactor.

The catalysed reaction is NAD(+) + (deoxyribonucleotide)n-3'-hydroxyl + 5'-phospho-(deoxyribonucleotide)m = (deoxyribonucleotide)n+m + AMP + beta-nicotinamide D-nucleotide.. In terms of biological role, DNA ligase that catalyzes the formation of phosphodiester linkages between 5'-phosphoryl and 3'-hydroxyl groups in double-stranded DNA using NAD as a coenzyme and as the energy source for the reaction. It is essential for DNA replication and repair of damaged DNA. The chain is DNA ligase from Nitrosomonas eutropha (strain DSM 101675 / C91 / Nm57).